The primary structure comprises 556 residues: Glutamine--tRNA ligase (556 aa).

Positions 35–45 match the 'HIGH' region motif; the sequence is PEPNGYLHIGH. Residues 36 to 38 and 42 to 48 contribute to the ATP site; these read EPN and HIGHAKS. Residues Asp-68 and Tyr-213 each coordinate L-glutamine. Residues Thr-232 and 262–263 each bind ATP; that span reads RL. The 'KMSKS' region signature appears at 269–273; the sequence is VTSKR.

This sequence belongs to the class-I aminoacyl-tRNA synthetase family. In terms of assembly, monomer.

The protein localises to the cytoplasm. It carries out the reaction tRNA(Gln) + L-glutamine + ATP = L-glutaminyl-tRNA(Gln) + AMP + diphosphate. The sequence is that of Glutamine--tRNA ligase from Pseudomonas aeruginosa (strain ATCC 15692 / DSM 22644 / CIP 104116 / JCM 14847 / LMG 12228 / 1C / PRS 101 / PAO1).